The chain runs to 201 residues: Small ribosomal subunit protein uS4 (201 aa).

One can recognise an S4 RNA-binding domain in the interval 91 to 157 (SRLDNVIYRA…VPFQIARETV (67 aa)).

This sequence belongs to the universal ribosomal protein uS4 family. Part of the 30S ribosomal subunit. Contacts protein S5. The interaction surface between S4 and S5 is involved in control of translational fidelity.

In terms of biological role, one of the primary rRNA binding proteins, it binds directly to 16S rRNA where it nucleates assembly of the body of the 30S subunit. Functionally, with S5 and S12 plays an important role in translational accuracy. This is Small ribosomal subunit protein uS4 from Mycobacterium leprae (strain Br4923).